Reading from the N-terminus, the 190-residue chain is Cytoplasmic envelopment protein 3 (190 aa).

G2 carries N-myristoyl glycine; by host lipidation. The disordered stretch occupies residues 27-190 (RQVSLRSYDN…TKKPAASLPF (164 aa)). The span at 30–43 (SLRSYDNIPPTSSS) shows a compositional bias: polar residues. Acidic residues predominate over residues 44–58 (DEGEDDDDGEDDDNE). Over residues 80 to 90 (SHREATHDGSK) the composition is skewed to basic and acidic residues. Residues 108 to 123 (KQSKKKKKPSKHHHHQ) show a composition bias toward basic residues. Residues 130–139 (ETDDLDEEDT) show a composition bias toward acidic residues.

It belongs to the herpesviridae cytoplasmic envelopment protein 3 family. In terms of assembly, interacts with cytoplasmic envelopment protein 2; this interaction is essential for the proper localization of each protein to the assembly complex and thus for the production of infectious virus. In terms of processing, myristoylation and palmitoylation (probably on one or more of the nearby cysteines at the N-terminus) enable membrane-binding and Golgi apparatus-specific targeting and are essential for efficient packaging. Phosphorylated. Phosphorylation does not seem to be required for recycling to the host Golgi apparatus. Packaging is selective for underphosphorylated forms.

It is found in the virion tegument. The protein resides in the virion membrane. It localises to the host cell membrane. The protein localises to the host Golgi apparatus membrane. Its function is as follows. Plays an important role in the cytoplasmic envelopment of tegument proteins and capsids during the assembly and egress processes. Also participates in viral entry at the fusion step probably by regulating the core fusion machinery. The chain is Cytoplasmic envelopment protein 3 (UL99) from Human cytomegalovirus (strain AD169) (HHV-5).